A 279-amino-acid chain; its full sequence is Tryptophan 2,3-dioxygenase (279 aa).

Substrate contacts are provided by residues 48 to 52 (FIVIH), Tyr-110, and Arg-114. His-237 contacts heme. Position 251 (Thr-251) interacts with substrate.

Belongs to the tryptophan 2,3-dioxygenase family. In terms of assembly, homotetramer. It depends on heme as a cofactor.

The enzyme catalyses L-tryptophan + O2 = N-formyl-L-kynurenine. It functions in the pathway amino-acid degradation; L-tryptophan degradation via kynurenine pathway; L-kynurenine from L-tryptophan: step 1/2. Functionally, heme-dependent dioxygenase that catalyzes the oxidative cleavage of the L-tryptophan (L-Trp) pyrrole ring and converts L-tryptophan to N-formyl-L-kynurenine. Catalyzes the oxidative cleavage of the indole moiety. The protein is Tryptophan 2,3-dioxygenase of Bacillus thuringiensis (strain Al Hakam).